The primary structure comprises 471 residues: 3-isopropylmalate dehydratase large subunit (471 aa).

[4Fe-4S] cluster-binding residues include cysteine 349, cysteine 409, and cysteine 412.

Belongs to the aconitase/IPM isomerase family. LeuC type 1 subfamily. Heterodimer of LeuC and LeuD. The cofactor is [4Fe-4S] cluster.

It carries out the reaction (2R,3S)-3-isopropylmalate = (2S)-2-isopropylmalate. The protein operates within amino-acid biosynthesis; L-leucine biosynthesis; L-leucine from 3-methyl-2-oxobutanoate: step 2/4. Its function is as follows. Catalyzes the isomerization between 2-isopropylmalate and 3-isopropylmalate, via the formation of 2-isopropylmaleate. In Aliivibrio fischeri (strain MJ11) (Vibrio fischeri), this protein is 3-isopropylmalate dehydratase large subunit.